The primary structure comprises 583 residues: PTS system lactose-specific EIICB component (583 aa).

Residues 8–409 (IEKGKPFFEK…VVDVMIYYPF (402 aa)) enclose the PTS EIIC type-3 domain. Helical transmembrane passes span 30–50 (GFIAAIPIILFSSIFILITYV), 64–84 (GILMKPYNYTMGIVGLIVAGT), 103–123 (INFISTMMAAMSGFLFLAADP), 137–157 (KGLLTAFISAFITVIVYNFFI), 176–196 (VFKDIFPLSAVIIIIYALDLL), 222–242 (GWIGVTLIFGAFAFFWFVGIH), 283–303 (FVATMGGTGATLVVPFMFMWL), 339–359 (VFFIPFIFAPIVNVWIFKFFV), and 381–401 (IVMGTGFAFWSFVLAIVLIVV). The span at 453 to 462 (ANETTTTESA) shows a compositional bias: low complexity. The tract at residues 453–475 (ANETTTTESAPSDEEVSAKNSSN) is disordered. The region spanning 480 to 583 (QTNVLVLCAG…LDFVQQQFEK (104 aa)) is the PTS EIIB type-3 domain. The Phosphocysteine intermediate; for EIIB activity role is filled by Cys487. At Cys487 the chain carries Phosphocysteine; by EIIA.

It localises to the cell membrane. It catalyses the reaction lactose(out) + N(pros)-phospho-L-histidyl-[protein] = lactose 6-phosphate(in) + L-histidyl-[protein]. Its function is as follows. The phosphoenolpyruvate-dependent sugar phosphotransferase system (sugar PTS), a major carbohydrate active transport system, catalyzes the phosphorylation of incoming sugar substrates concomitantly with their translocation across the cell membrane. The enzyme II LacEF PTS system is involved in lactose transport. This chain is PTS system lactose-specific EIICB component, found in Staphylococcus haemolyticus (strain JCSC1435).